The primary structure comprises 292 residues: Tetratricopeptide repeat protein 1 (292 aa).

2 stretches are compositionally biased toward basic and acidic residues: residues 1-12 and 47-64; these read MEEKSEDCKVPE and KAAE…ECFH. Positions 1 to 125 are disordered; it reads MEEKSEDCKV…SAKLKEEGNE (125 aa). Residues 88–98 show a composition bias toward acidic residues; the sequence is SSSELDEEYLI. S90 bears the Phosphoserine mark. The span at 99-125 shows a compositional bias: basic and acidic residues; sequence ELEKNMPEEEKQKRREESAKLKEEGNE. 3 TPR repeats span residues 116–149, 155–188, and 189–222; these read SAKL…CPAC, SVLF…NPTY, and IRAI…DPSV.

In terms of assembly, interacts with the GAP domain of NF1. Interacts (via TPR repeats) with HSP90AA1 and HSPA8.

The polypeptide is Tetratricopeptide repeat protein 1 (Ttc1) (Mus musculus (Mouse)).